The chain runs to 97 residues: Exodeoxyribonuclease 7 small subunit (97 aa).

A disordered region spans residues 1–22; the sequence is MAKTASPGATPPGNGTEPLPDN.

Belongs to the XseB family. Heterooligomer composed of large and small subunits.

The protein localises to the cytoplasm. It catalyses the reaction Exonucleolytic cleavage in either 5'- to 3'- or 3'- to 5'-direction to yield nucleoside 5'-phosphates.. In terms of biological role, bidirectionally degrades single-stranded DNA into large acid-insoluble oligonucleotides, which are then degraded further into small acid-soluble oligonucleotides. The chain is Exodeoxyribonuclease 7 small subunit from Burkholderia lata (strain ATCC 17760 / DSM 23089 / LMG 22485 / NCIMB 9086 / R18194 / 383).